Reading from the N-terminus, the 428-residue chain is Dihydroorotase (428 aa).

The Zn(2+) site is built by His59 and His61. Residues 61 to 63 and Asn93 contribute to the substrate site; that span reads HLR. Positions 151, 178, and 231 each coordinate Zn(2+). Residue Asn277 participates in substrate binding. Asp304 contacts Zn(2+). Asp304 is an active-site residue. Substrate contacts are provided by residues His308 and 322–323; that span reads FG.

It belongs to the metallo-dependent hydrolases superfamily. DHOase family. Class I DHOase subfamily. Zn(2+) serves as cofactor.

It catalyses the reaction (S)-dihydroorotate + H2O = N-carbamoyl-L-aspartate + H(+). It participates in pyrimidine metabolism; UMP biosynthesis via de novo pathway; (S)-dihydroorotate from bicarbonate: step 3/3. Its function is as follows. Catalyzes the reversible cyclization of carbamoyl aspartate to dihydroorotate. In Bacillus pumilus (strain SAFR-032), this protein is Dihydroorotase.